A 458-amino-acid polypeptide reads, in one-letter code: ATP synthase subunit beta (458 aa).

148–155 is a binding site for ATP; it reads GGAGVGKT.

The protein belongs to the ATPase alpha/beta chains family. In terms of assembly, F-type ATPases have 2 components, CF(1) - the catalytic core - and CF(0) - the membrane proton channel. CF(1) has five subunits: alpha(3), beta(3), gamma(1), delta(1), epsilon(1). CF(0) has three main subunits: a(1), b(2) and c(9-12). The alpha and beta chains form an alternating ring which encloses part of the gamma chain. CF(1) is attached to CF(0) by a central stalk formed by the gamma and epsilon chains, while a peripheral stalk is formed by the delta and b chains.

It is found in the cell inner membrane. The enzyme catalyses ATP + H2O + 4 H(+)(in) = ADP + phosphate + 5 H(+)(out). In terms of biological role, produces ATP from ADP in the presence of a proton gradient across the membrane. The catalytic sites are hosted primarily by the beta subunits. This chain is ATP synthase subunit beta, found in Pseudomonas aeruginosa (strain LESB58).